The following is a 460-amino-acid chain: Nuclear distribution protein PAC1-1 (460 aa).

One can recognise a LisH domain in the interval 9 to 41 (QADELHRALIAYLTAANLPNTAAALREELNLGE). A coiled-coil region spans residues 74–96 (LVTQIMDLESRNHILQSELDNAT). Positions 90–100 (SELDNATPTSR) are enriched in polar residues. Residues 90 to 115 (SELDNATPTSRQNKDPVAWLPRAPPR) are disordered. 8 WD repeats span residues 120-161 (SHRD…RTIK), 163-203 (HTKA…KNIR), 207-247 (GHDH…CVKT), 250-289 (GHAE…PEPR), 294-354 (GHEH…KTLA), 355-394 (GHDN…KCVK), 399-439 (AHGH…VTPD), and 441-460 (QIRC…IFAN).

It belongs to the WD repeat LIS1/nudF family. Self-associates. Interacts with NDL1 and dynein.

Its subcellular location is the cytoplasm. It is found in the cytoskeleton. The protein localises to the spindle pole. Its function is as follows. Positively regulates the activity of the minus-end directed microtubule motor protein dynein. May enhance dynein-mediated microtubule sliding by targeting dynein to the microtubule plus end. Required for nuclear migration during vegetative growth as well as development. Required for retrograde early endosome (EE) transport from the hyphal tip. Required for localization of dynein to the mitotic spindle poles. Recruits additional proteins to the dynein complex at SPBs. The protein is Nuclear distribution protein PAC1-1 of Sordaria macrospora (strain ATCC MYA-333 / DSM 997 / K(L3346) / K-hell).